Consider the following 464-residue polypeptide: Kynureninase 2 (464 aa).

Residues Leu135, Thr136, 163–166, Asp248, His251, and Tyr273 each bind pyridoxal 5'-phosphate; that span reads FPSD. At Lys274 the chain carries N6-(pyridoxal phosphate)lysine. The pyridoxal 5'-phosphate site is built by Trp313 and Asn341.

This sequence belongs to the kynureninase family. As to quaternary structure, homodimer. The cofactor is pyridoxal 5'-phosphate.

It is found in the cytoplasm. The enzyme catalyses L-kynurenine + H2O = anthranilate + L-alanine + H(+). It catalyses the reaction 3-hydroxy-L-kynurenine + H2O = 3-hydroxyanthranilate + L-alanine + H(+). It functions in the pathway amino-acid degradation; L-kynurenine degradation; L-alanine and anthranilate from L-kynurenine: step 1/1. It participates in cofactor biosynthesis; NAD(+) biosynthesis; quinolinate from L-kynurenine: step 2/3. Catalyzes the cleavage of L-kynurenine (L-Kyn) and L-3-hydroxykynurenine (L-3OHKyn) into anthranilic acid (AA) and 3-hydroxyanthranilic acid (3-OHAA), respectively. The sequence is that of Kynureninase 2 (bna5-2) from Aspergillus fumigatus (strain CBS 144.89 / FGSC A1163 / CEA10) (Neosartorya fumigata).